A 190-amino-acid chain; its full sequence is UPF0301 protein Pden_0436 (190 aa).

The protein belongs to the UPF0301 (AlgH) family.

The chain is UPF0301 protein Pden_0436 from Paracoccus denitrificans (strain Pd 1222).